Consider the following 295-residue polypeptide: Light-independent protochlorophyllide reductase iron-sulfur ATP-binding protein (295 aa).

ATP contacts are provided by residues 39–44 and lysine 68; that span reads GIGKST. Serine 43 serves as a coordination point for Mg(2+). Residues cysteine 124 and cysteine 158 each coordinate [4Fe-4S] cluster. 209–210 is a binding site for ATP; that stretch reads NR.

It belongs to the NifH/BchL/ChlL family. As to quaternary structure, homodimer. Protochlorophyllide reductase is composed of three subunits; ChlL, ChlN and ChlB. It depends on [4Fe-4S] cluster as a cofactor.

It carries out the reaction chlorophyllide a + oxidized 2[4Fe-4S]-[ferredoxin] + 2 ADP + 2 phosphate = protochlorophyllide a + reduced 2[4Fe-4S]-[ferredoxin] + 2 ATP + 2 H2O. It participates in porphyrin-containing compound metabolism; chlorophyll biosynthesis (light-independent). Component of the dark-operative protochlorophyllide reductase (DPOR) that uses Mg-ATP and reduced ferredoxin to reduce ring D of protochlorophyllide (Pchlide) to form chlorophyllide a (Chlide). This reaction is light-independent. The L component serves as a unique electron donor to the NB-component of the complex, and binds Mg-ATP. This chain is Light-independent protochlorophyllide reductase iron-sulfur ATP-binding protein, found in Prochlorococcus marinus (strain MIT 9301).